We begin with the raw amino-acid sequence, 304 residues long: MDGFIVIDKPIGLTSHDVVARVRQTLRQKKAGHTGTLDPFATGVLPVAVGEGTKAIPYLDESTKVYRATLILGAATDTQDHTGQVVHAGDWRHLEPQSVRDVVSSFTGKLSQLPPMFSALKRDGVPLYKLARTGREVERERREIEVFSLVVDSIDLPLVTFTLSCSRGTYVRTLAHDMGERLGCGAHLTELRRLSSGPFNLDRAISLERLKELAEAGNLADVLVSPSDALGHLHALPLTAQGAERVRRGMPPCREDVEHGAGTGIPAGTRLRLLRDGIVVAVADSLAGLWSSDTKNLRLLRVFN.

The Nucleophile role is filled by Asp-38.

The protein belongs to the pseudouridine synthase TruB family. Type 1 subfamily.

It carries out the reaction uridine(55) in tRNA = pseudouridine(55) in tRNA. Its function is as follows. Responsible for synthesis of pseudouridine from uracil-55 in the psi GC loop of transfer RNAs. The polypeptide is tRNA pseudouridine synthase B (Geobacter sulfurreducens (strain ATCC 51573 / DSM 12127 / PCA)).